Reading from the N-terminus, the 436-residue chain is GTPase Der (436 aa).

2 consecutive EngA-type G domains span residues 4-167 and 176-351; these read PVVA…KNIP and VQFC…ENHS. GTP contacts are provided by residues 10–17, 57–61, 119–122, 182–189, 229–233, and 294–297; these read GRPNVGKS, DTGGI, NKLD, DTAGM, and NKWD. The KH-like domain occupies 352-436; sequence LRVQTNVLND…PIKIFARARK (85 aa).

The protein belongs to the TRAFAC class TrmE-Era-EngA-EngB-Septin-like GTPase superfamily. EngA (Der) GTPase family. Associates with the 50S ribosomal subunit.

In terms of biological role, GTPase that plays an essential role in the late steps of ribosome biogenesis. This is GTPase Der from Bacillus velezensis (strain DSM 23117 / BGSC 10A6 / LMG 26770 / FZB42) (Bacillus amyloliquefaciens subsp. plantarum).